The following is a 525-amino-acid chain: Beta-galactoside alpha-2,6-sialyltransferase 2 (525 aa).

Residues 1–11 (MKPHLKQWRQR) are Cytoplasmic-facing. Residues 12–32 (MLFAIFVWGLLFLAIFIYFTN) traverse the membrane as a helical; Signal-anchor for type II membrane protein segment. The Lumenal segment spans residues 33-525 (SNPAAPMPSS…PVTRPNNTNT (493 aa)). 2 disordered regions span residues 85–107 (SASP…DGFD) and 145–183 (RQGA…PEEA). 3 disulfides stabilise this stretch: cysteine 249/cysteine 515, cysteine 292/cysteine 444, and cysteine 462/cysteine 473. Residues asparagine 303 and asparagine 333 are each glycosylated (N-linked (GlcNAc...) asparagine). Asparagine 521 is a glycosylation site (N-linked (GlcNAc...) asparagine).

It belongs to the glycosyltransferase 29 family.

The protein resides in the golgi apparatus. It is found in the golgi stack membrane. The enzyme catalyses a beta-D-galactoside + CMP-N-acetyl-beta-neuraminate = an N-acetyl-alpha-neuraminyl-(2-&gt;6)-beta-D-galactosyl derivative + CMP + H(+). Its function is as follows. Transfers sialic acid from the donor of substrate CMP-sialic acid to galactose containing acceptor substrates. Has alpha-2,6-sialyltransferase activity toward oligosaccharides that have the Gal-beta-1,4-GlcNAc sequence at the non-reducing end of their carbohydrate groups, but it has weak or no activities toward glycoproteins and glycolipids. The protein is Beta-galactoside alpha-2,6-sialyltransferase 2 (St6gal2) of Rattus norvegicus (Rat).